The chain runs to 299 residues: MGTKAQVERKLLCLFILAILLCSLALGSVTVHSSEPEVRIPENNPVKLSCAYSGFSSPRVEWKFDQGDTTRLVCYNNKITASYEDRVTFLPTGITFKSVTREDTGTYTCMVSEEGGNSYGEVKVKLIVLVPPSKPTVNIPSSATIGNRAVLTCSEQDGSPPSEYTWFKDGIVMPTNPKSTRAFSNSSYVLNPTTGELVFDPLSASDTGEYSCEARNGYGTPMTSNAVRMEAVERNVGVIVAAVLVTLILLGILVFGIWFAYSRGHFDRTKKGTSSKKVIYSQPSARSEGEFKQTSSFLV.

The first 27 residues, 1–27 (MGTKAQVERKLLCLFILAILLCSLALG), serve as a signal peptide directing secretion. 2 consecutive Ig-like V-type domains span residues 28 to 125 (SVTV…VKVK) and 135 to 228 (PTVN…NAVR). Residues 28–238 (SVTVHSSEPE…MEAVERNVGV (211 aa)) are Extracellular-facing. 2 cysteine pairs are disulfide-bonded: Cys-50/Cys-109 and Cys-153/Cys-212. The N-linked (GlcNAc...) asparagine glycan is linked to Asn-185. Residues 239-259 (IVAAVLVTLILLGILVFGIWF) form a helical membrane-spanning segment. The Cytoplasmic portion of the chain corresponds to 260 to 299 (AYSRGHFDRTKKGTSSKKVIYSQPSARSEGEFKQTSSFLV). Phosphoserine occurs at positions 281, 284, and 287.

It belongs to the immunoglobulin superfamily. As to quaternary structure, interacts with the ninth PDZ domain of MPDZ. Interacts with the first PDZ domain of PARD3. The association between PARD3 and PARD6B probably disrupts this interaction. Interacts with ITGAL (via I-domain). Interacts with CD151. In terms of assembly, (Microbial infection) Interacts with Mammalian reovirus sigma-1 capsid protein. (Microbial infection) Interacts with Human Rotavirus strain Wa vp4 capsid protein. N-glycosylated. Post-translationally, (Microbial infection) Cleaved by H.pylori virulence factor PqqE. Cleavage leads to altered tight junction functions. In terms of tissue distribution, expressed in endothelium, epithelium and leukocytes (at protein level).

The protein resides in the cell junction. It is found in the tight junction. The protein localises to the cell membrane. Its function is as follows. Seems to play a role in epithelial tight junction formation. Appears early in primordial forms of cell junctions and recruits PARD3. The association of the PARD6-PARD3 complex may prevent the interaction of PARD3 with JAM1, thereby preventing tight junction assembly. Plays a role in regulating monocyte transmigration involved in integrity of epithelial barrier. Ligand for integrin alpha-L/beta-2 involved in memory T-cell and neutrophil transmigration. Involved in platelet activation. Functionally, (Microbial infection) Acts as a receptor for Mammalian reovirus sigma-1. In terms of biological role, (Microbial infection) Acts as a receptor for Human Rotavirus strain Wa. The protein is Junctional adhesion molecule A (F11R) of Homo sapiens (Human).